The primary structure comprises 421 residues: C2 calcium-dependent domain-containing protein 4C (421 aa).

4 disordered regions span residues 13–97, 119–140, 158–228, and 250–303; these read RGSG…AKLA, DWLS…SLPS, HTRR…SPFG, and VSQL…TVHV. Residues 215–228 are compositionally biased toward polar residues; the sequence is ESDTGSSAESSPFG. Phosphoserine is present on residues serine 262, serine 264, and serine 273. Residues 305-421 form the C2 domain; that stretch reads PRGSVRLLAE…LPLTSLLPFL (117 aa).

The protein belongs to the C2CD4 family.

In Homo sapiens (Human), this protein is C2 calcium-dependent domain-containing protein 4C (C2CD4C).